Reading from the N-terminus, the 539-residue chain is Chaperonin GroEL (539 aa).

ATP-binding positions include 30-33 (TLGP), Lys-51, 87-91 (DGTTT), Gly-415, 479-481 (NAA), and Asp-495.

The protein belongs to the chaperonin (HSP60) family. Forms a cylinder of 14 subunits composed of two heptameric rings stacked back-to-back. Interacts with the co-chaperonin GroES.

It is found in the cytoplasm. The catalysed reaction is ATP + H2O + a folded polypeptide = ADP + phosphate + an unfolded polypeptide.. Together with its co-chaperonin GroES, plays an essential role in assisting protein folding. The GroEL-GroES system forms a nano-cage that allows encapsulation of the non-native substrate proteins and provides a physical environment optimized to promote and accelerate protein folding. This is Chaperonin GroEL from Enterobacter agglomerans (Erwinia herbicola).